A 246-amino-acid polypeptide reads, in one-letter code: MIAKTTNLNLFYGKKQALFDINMQIEQNKITALIGASGCGKSTFLRCFNRMNDKIAKIDGLVEIKGKDVKNQDVVALRKNVGMVFQQPNVFVKSIYENISYAPKLHGMIKNKDEEEALVVDCLQKVGLFEEVKDKLKQNALALSGGQQQRLCIARALAIKPKLLLLDEPTSALDPISSGVIEELLKELSHNLSMIMVTHNMQQGKRVADYTAFFHLGELIEFGESKEFFENPKQEKTKAYLSGAFG.

One can recognise an ABC transporter domain in the interval Ala-3 to Leu-241. An ATP-binding site is contributed by Gly-35–Ser-42.

Belongs to the ABC transporter superfamily. Phosphate importer (TC 3.A.1.7) family. As to quaternary structure, the complex is composed of two ATP-binding proteins (PstB), two transmembrane proteins (PstC and PstA) and a solute-binding protein (PstS).

The protein resides in the cell inner membrane. It carries out the reaction phosphate(out) + ATP + H2O = ADP + 2 phosphate(in) + H(+). Its function is as follows. Part of the ABC transporter complex PstSACB involved in phosphate import. Responsible for energy coupling to the transport system. The sequence is that of Phosphate import ATP-binding protein PstB from Campylobacter jejuni subsp. jejuni serotype O:2 (strain ATCC 700819 / NCTC 11168).